Reading from the N-terminus, the 369-residue chain is H-2 class I histocompatibility antigen, K-B alpha chain (369 aa).

The N-terminal stretch at 1 to 21 (MVPCTLLLLLAAALAPTQTRA) is a signal peptide. The tract at residues 22–111 (GPHSLRYFVT…LLGYYNQSKG (90 aa)) is alpha-1. Topologically, residues 22–305 (GPHSLRYFVT…EPPPSTVSNM (284 aa)) are extracellular. N-linked (GlcNAc...) asparagine glycosylation occurs at Asn-107. The segment at 112–203 (GSHTIQVISG…KNGNATLLRT (92 aa)) is alpha-2. An intrachain disulfide couples Cys-122 to Cys-185. Asn-197 carries an N-linked (GlcNAc...) asparagine glycan. The segment at 204-295 (DSPKAHVTHH…GLPEPLTLRW (92 aa)) is alpha-3. The Ig-like C1-type domain maps to 206–294 (PKAHVTHHSR…QGLPEPLTLR (89 aa)). The cysteines at positions 224 and 280 are disulfide-linked. The interval 296–305 (EPPPSTVSNM) is connecting peptide. The chain crosses the membrane as a helical span at residues 306-328 (ATVAVLVVLGAAIVTGAVVAFVM). At 329–369 (KMRRRNTGGKGGDYALAPGSQTSDLSLPDCKVMVHDPHSLA) the chain is on the cytoplasmic side. 2 positions are modified to phosphoserine: Ser-351 and Ser-354.

The protein belongs to the MHC class I family. In terms of assembly, heterodimer of an alpha chain and a beta chain (beta-2-microglobulin).

It localises to the membrane. Its function is as follows. Involved in the presentation of foreign antigens to the immune system. This is H-2 class I histocompatibility antigen, K-B alpha chain (H2-K1) from Mus musculus (Mouse).